We begin with the raw amino-acid sequence, 360 residues long: Chorismate synthase (360 aa).

Residue Arg-46 coordinates NADP(+). FMN is bound by residues 123–125, 235–236, Gly-275, 290–294, and Arg-316; these read RSS, NA, and KPTPS.

The protein belongs to the chorismate synthase family. In terms of assembly, homotetramer. The cofactor is FMNH2.

It carries out the reaction 5-O-(1-carboxyvinyl)-3-phosphoshikimate = chorismate + phosphate. Its pathway is metabolic intermediate biosynthesis; chorismate biosynthesis; chorismate from D-erythrose 4-phosphate and phosphoenolpyruvate: step 7/7. In terms of biological role, catalyzes the anti-1,4-elimination of the C-3 phosphate and the C-6 proR hydrogen from 5-enolpyruvylshikimate-3-phosphate (EPSP) to yield chorismate, which is the branch point compound that serves as the starting substrate for the three terminal pathways of aromatic amino acid biosynthesis. This reaction introduces a second double bond into the aromatic ring system. The polypeptide is Chorismate synthase (Wolinella succinogenes (strain ATCC 29543 / DSM 1740 / CCUG 13145 / JCM 31913 / LMG 7466 / NCTC 11488 / FDC 602W) (Vibrio succinogenes)).